The sequence spans 1257 residues: Receptor tyrosine-protein kinase erbB-2 (1257 aa).

Residues 1–22 (MELAAWCRWGFLLALLPPGIAG) form the signal peptide. The Extracellular segment spans residues 23–654 (TQVCTGTDMK…PAEQRASPVT (632 aa)). Cys26 and Cys53 are disulfide-bonded. N-linked (GlcNAc...) asparagine glycans are attached at residues Asn68 and Asn188. Cystine bridges form between Cys163–Cys193, Cys196–Cys205, Cys200–Cys213, Cys221–Cys228, Cys225–Cys236, Cys237–Cys245, Cys241–Cys253, Cys256–Cys265, Cys269–Cys296, Cys300–Cys312, Cys316–Cys332, Cys335–Cys339, Cys343–Cys368, Cys476–Cys506, Cys513–Cys522, and Cys517–Cys530. N-linked (GlcNAc...) asparagine glycosylation occurs at Asn260. A glycan (N-linked (GlcNAc...) asparagine) is linked at Asn532. 8 disulfides stabilise this stretch: Cys533–Cys542, Cys546–Cys562, Cys565–Cys578, Cys569–Cys586, Cys589–Cys598, Cys602–Cys625, Cys628–Cys636, and Cys632–Cys644. The N-linked (GlcNAc...) asparagine glycan is linked to Asn573. N-linked (GlcNAc...) asparagine glycosylation is present at Asn631. The chain crosses the membrane as a helical span at residues 655–677 (FIIATVVGVLLFLILVVVVGILI). The required for interaction with KPNB1 and EEA1 stretch occupies residues 678–691 (KRRRQKIRKYTMRR). Residues 678-691 (KRRRQKIRKYTMRR) carry the Nuclear localization signal motif. Residues 678-1257 (KRRRQKIRKY…PEYLGLDVPV (580 aa)) lie on the Cytoplasmic side of the membrane. A Protein kinase domain is found at 722–989 (LRKVKVLGSG…RMARDPQRFV (268 aa)). ATP contacts are provided by residues 728 to 736 (LGSGAFGTV) and Lys755. Asp847 acts as the Proton acceptor in catalysis. Tyr879 bears the Phosphotyrosine mark. A disordered region spans residues 1029-1181 (QQGFFSPDPT…PKTLSPGKNG (153 aa)). A phosphoserine mark is found at Ser1056, Ser1080, Ser1085, and Ser1109. Tyr1114 is subject to Phosphotyrosine. Residue Tyr1141 is modified to Phosphotyrosine; by autocatalysis. A compositionally biased stretch (pro residues) spans 1149-1163 (PQPPLTPEGPLPPVR). The residue at position 1168 (Thr1168) is a Phosphothreonine. An interaction with PIK3C2B region spans residues 1197-1199 (EYL). Tyr1198 carries the phosphotyrosine modification. The disordered stretch occupies residues 1200-1257 (VPREGTASPPHPSPAFSPAFDNLYYWDQNSSEQGPPPSNFEGTPTAENPEYLGLDVPV). Residue Tyr1250 is modified to Phosphotyrosine; by autocatalysis.

It belongs to the protein kinase superfamily. Tyr protein kinase family. EGF receptor subfamily. As to quaternary structure, homodimer. Heterodimer with EGFR, ERBB3 and ERBB4. Part of a complex with EGFR and either PIK3C2A or PIK3C2B. May interact with PIK3C2B when phosphorylated on Tyr-1198. Interacts with PRKCABP and PLXNB1. Interacts (when phosphorylated on Tyr-1250) with MEMO1. Interacts with MUC1. Interacts (when phosphorylated on Tyr-1141) with GRB7 (via SH2 domain). Interacts (when phosphorylated on Tyr-1250) with ERBIN Interacts with SRC, KPNB1, RANBP2, EEA1, CRM1, CLTC, PTK6, RPA194, MYOC and ACTB. Interacts with HSP90AA1 and HSP90AB1; the interaction suppresses ERBB2 kinase activity. Interacts with SORL1; this interaction regulates ERBB2 subcellular distribution by promoting its recycling after internalization from endosomes back to the plasma membrane, hence stimulates ERBB2-mediated signaling. Interacts with SH3BGRL. Interacts with ROR1. Post-translationally, autophosphorylated. Autophosphorylation occurs in trans, i.e. one subunit of the dimeric receptor phosphorylates tyrosine residues on the other subunit. Ligand-binding increases phosphorylation on tyrosine residues. Signaling via SEMA4C promotes phosphorylation at Tyr-1250. Dephosphorylated by PTPN12.

It is found in the cell membrane. It localises to the cell projection. The protein resides in the ruffle membrane. The protein localises to the early endosome. Its subcellular location is the cytoplasm. It is found in the perinuclear region. It localises to the nucleus. The enzyme catalyses L-tyrosyl-[protein] + ATP = O-phospho-L-tyrosyl-[protein] + ADP + H(+). Functionally, protein tyrosine kinase that is part of several cell surface receptor complexes, but that apparently needs a coreceptor for ligand binding. Essential component of a neuregulin-receptor complex, although neuregulins do not interact with it alone. GP30 is a potential ligand for this receptor. Regulates outgrowth and stabilization of peripheral microtubules (MTs). Upon ERBB2 activation, the MEMO1-RHOA-DIAPH1 signaling pathway elicits the phosphorylation and thus the inhibition of GSK3B at cell membrane. This prevents the phosphorylation of APC and CLASP2, allowing its association with the cell membrane. In turn, membrane-bound APC allows the localization of MACF1 to the cell membrane, which is required for microtubule capture and stabilization. Interacts (preferentially with the tyrosine phosphorylated form) with CPNE3; this interaction occurs at the cell membrane and is increased in a growth factor heregulin-dependent manner. In the nucleus is involved in transcriptional regulation. Associates with the 5'-TCAAATTC-3' sequence in the PTGS2/COX-2 promoter and activates its transcription. Implicated in transcriptional activation of CDKN1A; the function involves STAT3 and SRC. Involved in the transcription of rRNA genes by RNA Pol I and enhances protein synthesis and cell growth. This is Receptor tyrosine-protein kinase erbB-2 (Erbb2) from Rattus norvegicus (Rat).